Consider the following 180-residue polypeptide: uncharacterized protein (180 aa).

It belongs to the isochorismatase family.

This is an uncharacterized protein from Bacillus subtilis (strain 168).